The sequence spans 165 residues: Large ribosomal subunit protein uL11 (165 aa).

The protein belongs to the universal ribosomal protein uL11 family. As to quaternary structure, part of the ribosomal stalk of the 50S ribosomal subunit. Interacts with L10 and the large rRNA to form the base of the stalk. L10 forms an elongated spine to which L12 dimers bind in a sequential fashion forming a multimeric L10(L12)X complex.

Functionally, forms part of the ribosomal stalk which helps the ribosome interact with GTP-bound translation factors. The sequence is that of Large ribosomal subunit protein uL11 from Thermococcus kodakarensis (strain ATCC BAA-918 / JCM 12380 / KOD1) (Pyrococcus kodakaraensis (strain KOD1)).